The chain runs to 365 residues: Heat-inducible transcription repressor HrcA (365 aa).

It belongs to the HrcA family.

In terms of biological role, negative regulator of class I heat shock genes (grpE-dnaK-dnaJ and groELS operons). Prevents heat-shock induction of these operons. The protein is Heat-inducible transcription repressor HrcA of Trichormus variabilis (strain ATCC 29413 / PCC 7937) (Anabaena variabilis).